The sequence spans 1250 residues: Protein SSD1 (1250 aa).

Residues 1-22 are compositionally biased toward polar residues; it reads MSKNSNVNNNRSQEPNNMFVQT. The interval 1–32 is disordered; that stretch reads MSKNSNVNNNRSQEPNNMFVQTTGGGKNAPKQ. Ser2 bears the N-acetylserine mark. The residue at position 40 (Ser40) is a Phosphoserine. The disordered stretch occupies residues 79–163; the sequence is TGQYLSGNSG…SSIYGHSRRH (85 aa). Positions 84–94 are enriched in polar residues; the sequence is SGNSGSNNHFT. Low complexity predominate over residues 124–145; it reads NNSGYYHNSYDNNNNSNNPGSN. Residues Ser164 and Ser183 each carry the phosphoserine modification. The segment covering 197 to 208 has biased composition (polar residues); the sequence is QADSGSNSTTEQ. 3 disordered regions span residues 197-338, 418-443, and 455-517; these read QADS…GGRK, KEKEEKKRRKDASMQHDLIPLNSSDD, and SNNF…DDVE. A Phosphothreonine modification is found at Thr227. Over residues 264–276 the composition is skewed to polar residues; sequence NEYSPGINSNWRN. The span at 277–287 shows a compositional bias: low complexity; that stretch reads QSQQPQQQLSP. Phosphoserine is present on residues Ser286 and Ser322. Over residues 319-329 the composition is skewed to polar residues; that stretch reads SNSSVHSFSSQ. Polar residues predominate over residues 481 to 495; that stretch reads STINNDSDSLSSPTK. Phosphoserine occurs at positions 491 and 492. The span at 497-510 shows a compositional bias: basic residues; sequence GVRRRSSLKQRPTQ. Residues 582 to 657 form the CSD2 domain; sequence AWFKPTDKKV…EIDSILRDNN (76 aa). Phosphotyrosine is present on Tyr688. Residues 694 to 1015 form the RNB domain; it reads DTNEYNIFAI…VHRQLKAVIH (322 aa). Residues 1064–1148 enclose the DIS3L2 C-terminal domain; sequence GQLLTMATVL…SIKNKFRSTA (85 aa).

Belongs to the RNR ribonuclease family.

Functionally, can suppress the lethality due to deletion of SIT4, and partially the defects due to BCY1 disruption. Is implicated in the control of the cell cycle G1 phase. In Saccharomyces cerevisiae (strain ATCC 204508 / S288c) (Baker's yeast), this protein is Protein SSD1 (SSD1).